The following is a 248-amino-acid chain: tRNA (guanine-N(1)-)-methyltransferase (248 aa).

Residues Gly113 and 133-138 (IGDYVL) contribute to the S-adenosyl-L-methionine site.

Belongs to the RNA methyltransferase TrmD family. Homodimer.

It is found in the cytoplasm. The enzyme catalyses guanosine(37) in tRNA + S-adenosyl-L-methionine = N(1)-methylguanosine(37) in tRNA + S-adenosyl-L-homocysteine + H(+). Functionally, specifically methylates guanosine-37 in various tRNAs. The protein is tRNA (guanine-N(1)-)-methyltransferase of Shewanella halifaxensis (strain HAW-EB4).